We begin with the raw amino-acid sequence, 194 residues long: Large ribosomal subunit protein eL15 (194 aa).

The tract at residues 161–194 is disordered; that stretch reads GLTSAGKKGRGLMYKGKGAEKARPSVRANGKKTK.

The protein belongs to the eukaryotic ribosomal protein eL15 family.

The sequence is that of Large ribosomal subunit protein eL15 from Methanococcus maripaludis (strain C5 / ATCC BAA-1333).